Reading from the N-terminus, the 308-residue chain is Spermidine synthase 1 (308 aa).

The 238-residue stretch at 17 to 254 (PGWFSEISPL…GVIGFMLCST (238 aa)) folds into the PABS domain. Gln-48 provides a ligand contact to S-adenosyl 3-(methylsulfanyl)propylamine. Residue Tyr-78 coordinates putrescine. Residues Gln-79, Asp-103, Glu-123, 154 to 155 (DG), and Asp-173 contribute to the S-adenosyl 3-(methylsulfanyl)propylamine site. Residue Asp-173 is the Proton acceptor of the active site. Putrescine contacts are provided by residues 173–176 (DSSD) and Tyr-242.

It belongs to the spermidine/spermine synthase family.

It catalyses the reaction S-adenosyl 3-(methylsulfanyl)propylamine + putrescine = S-methyl-5'-thioadenosine + spermidine + H(+). The protein operates within amine and polyamine biosynthesis; spermidine biosynthesis; spermidine from putrescine: step 1/1. This Datura stramonium (Jimsonweed) protein is Spermidine synthase 1.